A 626-amino-acid polypeptide reads, in one-letter code: Chaperone protein HtpG (626 aa).

Residues Met-1 to Arg-339 form an a; substrate-binding region. The tract at residues Glu-340–Lys-555 is b. Residues Leu-556–Gly-626 form a c region.

The protein belongs to the heat shock protein 90 family. As to quaternary structure, homodimer.

The protein localises to the cytoplasm. In terms of biological role, molecular chaperone. Has ATPase activity. The protein is Chaperone protein HtpG of Haemophilus influenzae (strain ATCC 51907 / DSM 11121 / KW20 / Rd).